We begin with the raw amino-acid sequence, 86 residues long: MTNIKSQQKRNRTNERARLRNKSVKSSLRTAVRAFREAVHAGEKEKAAKLLVSTSRKLDKAASKGVIHKNQAANKKSALARTLNKL.

Residues 1-25 (MTNIKSQQKRNRTNERARLRNKSVK) are disordered.

The protein belongs to the bacterial ribosomal protein bS20 family.

Its function is as follows. Binds directly to 16S ribosomal RNA. The protein is Small ribosomal subunit protein bS20 of Mycobacterium leprae (strain Br4923).